The primary structure comprises 558 residues: Cyclomaltodextrinase (558 aa).

3 residues coordinate Ca(2+): asparagine 143, glycine 168, and aspartate 170. Substrate is bound by residues histidine 243 and arginine 323. The active-site Nucleophile is aspartate 325. Catalysis depends on glutamate 354, which acts as the Proton donor. Substrate contacts are provided by residues 420-421, aspartate 465, and arginine 469; that span reads HD.

The protein belongs to the glycosyl hydrolase 13 family. Monomer. Depending on the pH of the solution, exists as a monomer, a homodimer or as an assembly of six homodimers forming a dodecamer, which is catalytically the most efficient form of the enzyme. Ca(2+) serves as cofactor.

The catalysed reaction is cyclomaltodextrin + H2O = linear maltodextrin. It carries out the reaction Hydrolysis of pullulan to panose (6-alpha-D-glucosylmaltose).. With respect to regulation, hydrolysis of beta-cyclodextrin is inhibited by Cu(2+), Zn(2+) and Ag(+), and activated by Ca(2+), EGTA and EDTA. Activity is increased over twofold in the presence of 5 mM EDTA. Competitively inhibited by acarbose and methyl 6-amino-6-deoxy-alpha-D-glucopyranoside by reducing the rate of the ring opening step of the reaction. Its function is as follows. Hydrolyzes alpha-, beta- and gamma-cyclodextrins and the resulting linear maltodextrins, with the highest activity with beta-cyclodextrin (cyclomaltoheptaose). Soluble starch is hydrolyzed slowly, but it is nevertheless preferred over pullulan as a substrate. Is able to hydrolyze amylose and amylopectin, with a very strong preference for amylose, with maltose and glucose as the main products. Maltose and glucose are the main hydrolysis products of cyclomaltodextrins, maltodextrins and starch, whereas panose is the main hydrolysis product of pullulan. Acarbose is partially hydrolyzed to glucose and pseudotrisaccharide. No activity with maltose as substrate. Has transglycosylating activity with high concentrations of maltotriose, maltotetraose and starch. This is Cyclomaltodextrinase from Bacillus sp.